We begin with the raw amino-acid sequence, 932 residues long: Chaperone protein ClpC3, chloroplastic (932 aa).

Residues 1–20 form a disordered region; sequence MERTLLNPPPSLRSPACRTT. The N-terminal 48 residues, 1–48, are a transit peptide targeting the chloroplast; sequence MERTLLNPPPSLRSPACRTTTATRIRPSSSMATMIPTPPPMRHARLVK. Residues 99–240 form the Clp R domain; the sequence is FDMFTDKAIK…RSEVIRMISD (142 aa). Repeat stretches follow at residues 102-167 and 177-240; these read FTDK…AGRG and FTPA…MISD. The segment at 264 to 511 is i; sequence LLEYGTNLTK…LVRLRNAQLP (248 aa). 309-316 serves as a coordination point for ATP; the sequence is GEPGVGKT. Residues 518-553 enclose the UVR domain; it reads EKKLKKIMAEKSEAIRSQDFEKAGALRGEEVELKSE. An II region spans residues 579-770; that stretch reads VTEADVQHIV…LIIMTSNVGS (192 aa). Residue 653–660 participates in ATP binding; the sequence is GPTGVGKS.

It belongs to the ClpA/ClpB family. ClpC subfamily.

Its subcellular location is the plastid. The protein localises to the chloroplast. Molecular chaperone that may interact with a ClpP-like protease involved in degradation of denatured proteins in the chloroplast. This Oryza sativa subsp. japonica (Rice) protein is Chaperone protein ClpC3, chloroplastic (CLPC3).